The sequence spans 214 residues: Probable transaldolase (214 aa).

The active-site Schiff-base intermediate with substrate is Lys-83.

The protein belongs to the transaldolase family. Type 3B subfamily.

The protein localises to the cytoplasm. It carries out the reaction D-sedoheptulose 7-phosphate + D-glyceraldehyde 3-phosphate = D-erythrose 4-phosphate + beta-D-fructose 6-phosphate. It functions in the pathway carbohydrate degradation; pentose phosphate pathway; D-glyceraldehyde 3-phosphate and beta-D-fructose 6-phosphate from D-ribose 5-phosphate and D-xylulose 5-phosphate (non-oxidative stage): step 2/3. Its function is as follows. Transaldolase is important for the balance of metabolites in the pentose-phosphate pathway. The protein is Probable transaldolase (tal) of Streptococcus pyogenes serotype M1.